The chain runs to 237 residues: Ribitol-5-phosphate cytidylyltransferase (237 aa).

CTP is bound by residues 7–10 (LAGG), 81–87 (GSDRNES), and S112.

Belongs to the IspD/TarI cytidylyltransferase family. TarI subfamily.

It carries out the reaction D-ribitol 5-phosphate + CTP + H(+) = CDP-L-ribitol + diphosphate. Its pathway is cell wall biogenesis; poly(ribitol phosphate) teichoic acid biosynthesis. Functionally, catalyzes the transfer of the cytidylyl group of CTP to D-ribitol 5-phosphate. This is Ribitol-5-phosphate cytidylyltransferase from Bacillus spizizenii (strain ATCC 23059 / NRRL B-14472 / W23) (Bacillus subtilis subsp. spizizenii).